The following is a 165-amino-acid chain: Ribosome maturation factor RimM (165 aa).

A PRC barrel domain is found at 94-165; it reads EDEFYIADLN…YVILNYQTKV (72 aa).

This sequence belongs to the RimM family. Binds ribosomal protein uS19.

It localises to the cytoplasm. Functionally, an accessory protein needed during the final step in the assembly of 30S ribosomal subunit, possibly for assembly of the head region. Essential for efficient processing of 16S rRNA. May be needed both before and after RbfA during the maturation of 16S rRNA. It has affinity for free ribosomal 30S subunits but not for 70S ribosomes. This Rickettsia prowazekii (strain Madrid E) protein is Ribosome maturation factor RimM.